The sequence spans 460 residues: Probable fibrosin-1 (460 aa).

Lys-8 is covalently cross-linked (Glycyl lysine isopeptide (Lys-Gly) (interchain with G-Cter in SUMO2)). 3 disordered regions span residues 40–79 (SLQG…FRPP), 205–311 (FAQK…KEEA), and 406–460 (YSRL…RADR). Residues 212–223 (GAPPAFASPPDP) are compositionally biased toward pro residues. Asymmetric dimethylarginine occurs at positions 229 and 239. Over residues 248–272 (GSDKERPVERREPSITKEEKDRDLP) the composition is skewed to basic and acidic residues. A Phosphoserine modification is found at Ser-281. A compositionally biased stretch (basic and acidic residues) spans 288 to 311 (RAGEEGPRPTKESVRVKEERKEEA). Residues 436-453 (APPPLVPAPRPSSPPRGP) show a composition bias toward pro residues.

The polypeptide is Probable fibrosin-1 (FBRS) (Homo sapiens (Human)).